Here is a 431-residue protein sequence, read N- to C-terminus: Enolase (431 aa).

Residue Q163 participates in (2R)-2-phosphoglycerate binding. E205 acts as the Proton donor in catalysis. Residues D242, E288, and D315 each coordinate Mg(2+). (2R)-2-phosphoglycerate-binding residues include K340, R369, S370, and K391. Residue K340 is the Proton acceptor of the active site.

The protein belongs to the enolase family. Requires Mg(2+) as cofactor.

It localises to the cytoplasm. The protein resides in the secreted. It is found in the cell surface. The catalysed reaction is (2R)-2-phosphoglycerate = phosphoenolpyruvate + H2O. It functions in the pathway carbohydrate degradation; glycolysis; pyruvate from D-glyceraldehyde 3-phosphate: step 4/5. Catalyzes the reversible conversion of 2-phosphoglycerate (2-PG) into phosphoenolpyruvate (PEP). It is essential for the degradation of carbohydrates via glycolysis. The protein is Enolase of Bacillus cereus (strain ZK / E33L).